The following is a 209-amino-acid chain: Orotate phosphoribosyltransferase (209 aa).

5-phospho-alpha-D-ribose 1-diphosphate-binding positions include arginine 98, lysine 102, histidine 104, and 124–132 (EDLISTGKS). Residue serine 128 participates in orotate binding.

This sequence belongs to the purine/pyrimidine phosphoribosyltransferase family. PyrE subfamily. Homodimer. It depends on Mg(2+) as a cofactor.

It catalyses the reaction orotidine 5'-phosphate + diphosphate = orotate + 5-phospho-alpha-D-ribose 1-diphosphate. Its pathway is pyrimidine metabolism; UMP biosynthesis via de novo pathway; UMP from orotate: step 1/2. In terms of biological role, catalyzes the transfer of a ribosyl phosphate group from 5-phosphoribose 1-diphosphate to orotate, leading to the formation of orotidine monophosphate (OMP). This is Orotate phosphoribosyltransferase from Malacoplasma penetrans (strain HF-2) (Mycoplasma penetrans).